We begin with the raw amino-acid sequence, 264 residues long: Thymidylate synthase (264 aa).

Arg21 provides a ligand contact to dUMP. His51 serves as a coordination point for (6R)-5,10-methylene-5,6,7,8-tetrahydrofolate. Residue 126–127 (RR) participates in dUMP binding. Cys146 acts as the Nucleophile in catalysis. Residues 166–169 (RSAD), Asn177, and 207–209 (HLY) each bind dUMP. Asp169 contacts (6R)-5,10-methylene-5,6,7,8-tetrahydrofolate. Ser263 serves as a coordination point for (6R)-5,10-methylene-5,6,7,8-tetrahydrofolate.

The protein belongs to the thymidylate synthase family. Bacterial-type ThyA subfamily. As to quaternary structure, homodimer.

The protein localises to the cytoplasm. It catalyses the reaction dUMP + (6R)-5,10-methylene-5,6,7,8-tetrahydrofolate = 7,8-dihydrofolate + dTMP. It participates in pyrimidine metabolism; dTTP biosynthesis. Its function is as follows. Catalyzes the reductive methylation of 2'-deoxyuridine-5'-monophosphate (dUMP) to 2'-deoxythymidine-5'-monophosphate (dTMP) while utilizing 5,10-methylenetetrahydrofolate (mTHF) as the methyl donor and reductant in the reaction, yielding dihydrofolate (DHF) as a by-product. This enzymatic reaction provides an intracellular de novo source of dTMP, an essential precursor for DNA biosynthesis. In Shouchella clausii (strain KSM-K16) (Alkalihalobacillus clausii), this protein is Thymidylate synthase.